A 347-amino-acid chain; its full sequence is Quinolinate synthase (347 aa).

Residues histidine 47 and serine 68 each coordinate iminosuccinate. Residue cysteine 113 participates in [4Fe-4S] cluster binding. Iminosuccinate contacts are provided by residues 139 to 141 (YAN) and serine 156. [4Fe-4S] cluster is bound at residue cysteine 200. Iminosuccinate-binding positions include 226 to 228 (HPE) and threonine 243. Residue cysteine 297 coordinates [4Fe-4S] cluster.

The protein belongs to the quinolinate synthase family. Type 1 subfamily. Requires [4Fe-4S] cluster as cofactor.

The protein resides in the cytoplasm. It carries out the reaction iminosuccinate + dihydroxyacetone phosphate = quinolinate + phosphate + 2 H2O + H(+). The protein operates within cofactor biosynthesis; NAD(+) biosynthesis; quinolinate from iminoaspartate: step 1/1. Functionally, catalyzes the condensation of iminoaspartate with dihydroxyacetone phosphate to form quinolinate. In Shigella flexneri, this protein is Quinolinate synthase.